The sequence spans 156 residues: Endogenous retrovirus group K member 10 Pro protein (156 aa).

A Peptidase A2 domain is found at 21–96 (FEGLVDTGAD…IPLNLWGRDL (76 aa)). Residue aspartate 26 is part of the active site. Positions 111-156 (YSPTSQKIMTKMGYIPGKGLGKNEDGIKVPVEAKINQEREGIGYPF) constitute a G-patch domain.

The protein belongs to the peptidase A2 family. HERV class-II K(HML-2) subfamily. As to quaternary structure, active as a homodimer. Autoproteolytically processed at the N-terminus. Expected C-terminal autoprocessing not detected. The sequence shown is that of the processed Pro protein.

It catalyses the reaction Processing at the authentic HIV-1 PR recognition site and release of the mature p17 matrix and the p24 capsid protein, as a result of the cleavage of the -SQNY-|-PIVQ- cleavage site.. Its activity is regulated as follows. Resistant to a number of clinically useful HIV-1 PR inhibitors. Inhibited by cyclic urea SD146. Functionally, retroviral proteases have roles in processing of the primary translation products and the maturation of the viral particle. Endogenous Pro proteins may have kept, lost or modified their original function during evolution. This endogenous protein has retained most of the characteristics of retroviral proteases. The polypeptide is Endogenous retrovirus group K member 10 Pro protein (ERVK-10) (Homo sapiens (Human)).